Consider the following 614-residue polypeptide: Probable indole-3-acetic acid-amido synthetase GH3.2 (614 aa).

It belongs to the IAA-amido conjugating enzyme family. Expressed in roots, flowers and callus.

May catalyze the synthesis of indole-3-acetic acid (IAA)-amino acid conjugates, providing a mechanism for the plant to cope with the presence of excess auxin. The polypeptide is Probable indole-3-acetic acid-amido synthetase GH3.2 (GH3.2) (Oryza sativa subsp. japonica (Rice)).